A 317-amino-acid polypeptide reads, in one-letter code: Protoheme IX farnesyltransferase (317 aa).

A run of 9 helical transmembrane segments spans residues 36-56 (VMVLVIFTALVGMVVSDATVN), 57-77 (PVIAAISLLMIAVGAGASGCL), 108-128 (LAFGIVLSVGSVLILGLASNW), 129-149 (LAAGLLAFTIVFYAVIYSMWL), 157-177 (IVIGGAAGALPPVVGQAAVTG), 184-204 (LVLFAIIFIWTPPHFWALALV), 230-247 (IVWYSLLLAPLALVPVWL), 251-273 (GWLYAVVGVLGGLGMLAGAVQVY), and 284-304 (AAMGLFAFSILYLFLLFSALL).

It belongs to the UbiA prenyltransferase family. Protoheme IX farnesyltransferase subfamily.

It is found in the cell inner membrane. The enzyme catalyses heme b + (2E,6E)-farnesyl diphosphate + H2O = Fe(II)-heme o + diphosphate. It functions in the pathway porphyrin-containing compound metabolism; heme O biosynthesis; heme O from protoheme: step 1/1. Its function is as follows. Converts heme B (protoheme IX) to heme O by substitution of the vinyl group on carbon 2 of heme B porphyrin ring with a hydroxyethyl farnesyl side group. This chain is Protoheme IX farnesyltransferase, found in Methylorubrum populi (strain ATCC BAA-705 / NCIMB 13946 / BJ001) (Methylobacterium populi).